The primary structure comprises 241 residues: Small ribosomal subunit protein uS2 (241 aa).

Belongs to the universal ribosomal protein uS2 family.

In Photorhabdus laumondii subsp. laumondii (strain DSM 15139 / CIP 105565 / TT01) (Photorhabdus luminescens subsp. laumondii), this protein is Small ribosomal subunit protein uS2.